The primary structure comprises 750 residues: MAQEEMEVDLLNLLNPMYSNRDVSTSHQPRGSGQVLFLPPPLTYSDDSEDLFLGPTEPHDVIVLDSVEEAPGQVAAPTNALQMLHSALEQLRQAAEQRSSVRPTRVQRRSTRRHQRGGSQRTAGTSSRAALSNFFQINRTQGVAPTSEREERNAALRTESSRTSPGDSSDETVELSEEEEGGGGSSTDVDEVDINAGAAPPAEPAPEELQINVIEVQAEAPESLPVPESVTLPLQIQKKQKTPVKQLSPVKHLPPEEDEGDTCAICFEPWTNAGQHRLSALRCGHLFGFTCIERWLKGGAAKCPQCNKKAKRADIVVLYARTLKALDTSEQERMKSSLEMEQSMRRKAELESAQCRLQVQVLTDECGKLRKQIQELKMLIAQHGTSTSMQASSSRSTISGSLSSSQGQHKYSFEKAILISQTGSCRVMSYCESMSCLVVSQPSPQTTLIPGCGIKKLSAANLKSSQYVPIHSKQIRGLAFSNRSDGLLLSAALDNTIKLTSLMTNTVVQTYNTGRPVWSCCWCSDNSNYVYAGLINGSVLVYDLRDTSNCVQELVPLGSRCPVVSLSYVPRAASEVFPCGGVLVGTLEGACFWEMKDDQYRPHVLPLEPGGCTDIQIESNTRHCLVTYRPGKNHNYVRGVMMELTSNRLNDSEDEYSCSCYPVQTFNAGNTCKLLTKNAIFQSPERDGTILVCAGDEASNSAMLWHSGNGTLLQKLQADQPVLDICPMEVNQSSMLATLTEKMIKIYKWE.

Residues 92–206 (RQAAEQRSSV…GAAPPAEPAP (115 aa)) are disordered. Over residues 105–116 (RVQRRSTRRHQR) the composition is skewed to basic residues. Residues 122–144 (TAGTSSRAALSNFFQINRTQGVA) are compositionally biased toward polar residues. Over residues 168-181 (SSDETVELSEEEEG) the composition is skewed to acidic residues. The RING-type; degenerate zinc-finger motif lies at 263–307 (CAICFEPWTNAGQHRLSALRCGHLFGFTCIERWLKGGAAKCPQCN). Positions 387 to 405 (TSMQASSSRSTISGSLSSS) are enriched in low complexity. The disordered stretch occupies residues 387–406 (TSMQASSSRSTISGSLSSSQ). 3 WD repeats span residues 470-510 (IHSK…VVQT), 512-552 (NTGR…NCVQ), and 558-603 (GSRC…YRPH).

[4Fe-4S] cluster serves as cofactor.

It localises to the nucleus. The protein resides in the PML body. Its subcellular location is the cytoplasm. The catalysed reaction is S-ubiquitinyl-[E2 ubiquitin-conjugating enzyme]-L-cysteine + [acceptor protein]-L-lysine = [E2 ubiquitin-conjugating enzyme]-L-cysteine + N(6)-ubiquitinyl-[acceptor protein]-L-lysine.. Its pathway is protein modification; protein ubiquitination. Functionally, E3 ubiquitin-protein ligase required for the repair of DNA interstrand cross-links (ICL) in response to DNA damage. Plays a key role in RPA-mediated DNA damage signaling and repair. Required to translesion DNA synthesis across DNA-protein cross-link adducts by catalyzing ubiquitination of proteins on single-stranded DNA (ssDNA). Mediates ubiquitination of the hmces DNA-protein cross-link, possibly promoting its degradation. The polypeptide is E3 ubiquitin-protein ligase rfwd3.S (rfwd3.S) (Xenopus laevis (African clawed frog)).